The primary structure comprises 142 residues: Universal stress protein D (142 aa).

This sequence belongs to the universal stress protein A family.

The protein localises to the cytoplasm. Functionally, required for resistance to DNA-damaging agents. The protein is Universal stress protein D (uspD) of Escherichia coli (strain K12).